Reading from the N-terminus, the 155-residue chain is Small ribosomal subunit protein uS7 (155 aa).

Belongs to the universal ribosomal protein uS7 family. Part of the 30S ribosomal subunit. Contacts proteins S9 and S11.

In terms of biological role, one of the primary rRNA binding proteins, it binds directly to 16S rRNA where it nucleates assembly of the head domain of the 30S subunit. Is located at the subunit interface close to the decoding center, probably blocks exit of the E-site tRNA. The sequence is that of Small ribosomal subunit protein uS7 from Chlorobium phaeobacteroides (strain DSM 266 / SMG 266 / 2430).